The following is a 1706-amino-acid chain: Cadherin-99C (1706 aa).

A signal peptide spans 1–28; that stretch reads MAARNSLTPQQGLGFFGLLILLCSAVLG. The Extracellular segment spans residues 29-1395; that stretch reads KSQMCEVETG…AIDNEVFPFT (1367 aa). Cadherin domains lie at 68–142, 143–264, 277–387, 388–500, 519–604, 605–704, 707–807, 808–908, 909–1005, 1038–1148, and 1156–1270; these read DPDT…APRF, MNTP…DPSF, INPE…PPVI, SSSQ…APKL, VTQV…PPRF, QKPI…NPEF, STLP…VPKF, SDAR…PPRF, ITVP…RVDV, SDDS…APEF, and QQDT…ALSF. Asn105 and Asn188 each carry an N-linked (GlcNAc...) asparagine glycan. Residues Asn442, Asn553, Asn620, and Asn753 are each glycosylated (N-linked (GlcNAc...) asparagine). N-linked (GlcNAc...) asparagine glycans are attached at residues Asn1053, Asn1088, and Asn1108. 2 N-linked (GlcNAc...) asparagine glycosylation sites follow: Asn1311 and Asn1367. The chain crosses the membrane as a helical span at residues 1396–1416; that stretch reads LIAISLVILILGTIGIIYICI. Topologically, residues 1417 to 1706 are cytoplasmic; sequence SWSKYKNFKQ…RSEVETTTEL (290 aa).

Interacts (via the cytoplasmic domain) with ck. Interacts (via the cytoplasmic domain) with Cul1 and Ubr3.

Its subcellular location is the apical cell membrane. The protein resides in the endosome membrane. The protein localises to the cell projection. It is found in the microvillus membrane. Its function is as follows. Cadherin that functions in epithelial morphogenesis and the intestine epithelial immune response. Essential for female fertility. Regulates the length and organization of apical microvilli in developing follicle cells and salivary glands. Function in the follicle cell is essential for egg development as the microvilli secrete eggshell material such as the vitelline membrane. Acts at least in part by regulating the recruitment of the myosin ck to the follicle cell microvilli. Also required to regulate cell rearrangements during salivary tube elongation, possibly by modulating cellular adhesion between the apical surface and apical extracellular matrix during epithelial tube elongation. May also function in cellular adhesion during the development of other tubular epithelia such as the trachea. Possibly functions as an apical membrane determinant which acts in apical membrane expansion during salivary and tracheal epithelial tube elongation. In salivary gland development, this function is independent of the other apical membrane determinants crb and sas. Essential downstream component of a hh-signaling pathway which regulates the Duox-dependent gut epithelial immune response to bacterial uracil; required for endosome formation in the enterocyte and activating norpA-dependent Ca2+ mobilization, which are essential steps in the Duox-dependent production of reactive oxygen species (ROS) in response to intestinal bacterial infection. This is Cadherin-99C from Drosophila melanogaster (Fruit fly).